Here is a 318-residue protein sequence, read N- to C-terminus: Beta-galactosidase small subunit (318 aa).

This sequence belongs to the bacterial beta-galactosidase small subunit family. In terms of assembly, heterodimer of a large (LacL) and a small subunit (LacM).

It carries out the reaction Hydrolysis of terminal non-reducing beta-D-galactose residues in beta-D-galactosides.. Its function is as follows. Component of a beta-galactosidase. The sequence is that of Beta-galactosidase small subunit from Lactobacillus helveticus (Lactobacillus suntoryeus).